A 58-amino-acid polypeptide reads, in one-letter code: UPF0339 protein TDE_0826 (58 aa).

It belongs to the UPF0339 family.

The protein is UPF0339 protein TDE_0826 of Treponema denticola (strain ATCC 35405 / DSM 14222 / CIP 103919 / JCM 8153 / KCTC 15104).